Consider the following 189-residue polypeptide: Small heat shock protein 21 (189 aa).

Residues 26–53 are disordered; it reads PPNFNPRKIAQGDNGKGQQVSRYGAGAG. The sHSP domain occupies 77–183; it reads KYFVGFDDNV…HEKIVNIPIS (107 aa).

It belongs to the small heat shock protein (HSP20) family.

Functionally, heat shock protein required for pathogenicity. Mediates thermotolerance and adaptation to oxidative stress and ethanol-induced stress. Required for invasive growth and filament formation under various filament inducing conditions. Plays a role in the capacity of damaging human-derived endothelial and oral epithelial cells during infection. Potentiates resistance to antifungal drugs, as well as resistance to killing by human neutrophils. Plays a major role in trehalose homeostasis in response to elevated temperatures. Regulates CEK1 activation by phosphorylation in response to elevated temperatures. The sequence is that of Small heat shock protein 21 (HSP21) from Candida albicans (strain SC5314 / ATCC MYA-2876) (Yeast).